Reading from the N-terminus, the 529-residue chain is Cytochrome P450 monooxygenase acuD (529 aa).

A helical membrane pass occupies residues 8 to 28; the sequence is FAVIAASAAAVAGVLFLIYAA. N81 carries N-linked (GlcNAc...) asparagine glycosylation. Residue C449 participates in heme binding.

Belongs to the cytochrome P450 family. It depends on heme as a cofactor.

It localises to the endoplasmic reticulum membrane. The enzyme catalyses 3-hydroxybenzyl alcohol + reduced [NADPH--hemoprotein reductase] + O2 = gentisyl alcohol + oxidized [NADPH--hemoprotein reductase] + H2O + H(+). It participates in secondary metabolite biosynthesis. In terms of biological role, cytochrome P450 monooxygenase; part of the gene cluster that mediates the biosynthesis of aculins. The pathway begins with the synthesis of 6-methylsalicylic acid by the polyketide synthase (PKS) acuA via condensation of acetate and malonate units. The 6-methylsalicylic acid decarboxylase acuB then catalyzes the decarboxylation of 6-methylsalicylic acid to yield m-cresol (also known as 3-methylphenol). These first reactions occur in the cytosol. The intermediate m-cresol is then transported into the endoplasmic reticulum where the cytochrome P450 monooxygenase acuC converts it to m-hydroxybenzyl alcohol, which is further converted to gentisyl alcohol by the cytochrome P450 monooxygenase acuD. Gentisyl alcohol is further oxidized by the oxidoreductase acuE that probably catalyzes hydroxylation of the aromatic ring. The aromatic system might then be opened by oxidation through a Baeyer-Villiger type of oxidation, which could be catalyzed by acuF, with the carboxylic acid at C-1 subsequently reduced to an aldehyde by acuG. Subsequently, a hemiacetal is formed, before the dehydrogenase acuH would reduce the double bond between C-4 and C-6. Finally, keto-enol tautomerism results in formation of aculinic acid, which exists as two diastereomers (both R/S configurations at C-1) by non-enzymatic hemiacetal formation. The carboxypeptidase acuI could be involved in the linking of aculinic acid to an aculene A moiety produced by the aculene biosynthesis cluster and which leads to the production of aculin A. AcuI may also be involved in the attachment of proline to aculinic acid to form epi-aculins A and B. The polypeptide is Cytochrome P450 monooxygenase acuD (Aspergillus aculeatus (strain ATCC 16872 / CBS 172.66 / WB 5094)).